Reading from the N-terminus, the 219-residue chain is Uracil-DNA glycosylase (219 aa).

The active-site Proton acceptor is the Asp63.

Belongs to the uracil-DNA glycosylase (UDG) superfamily. UNG family.

It localises to the cytoplasm. The catalysed reaction is Hydrolyzes single-stranded DNA or mismatched double-stranded DNA and polynucleotides, releasing free uracil.. Functionally, excises uracil residues from the DNA which can arise as a result of misincorporation of dUMP residues by DNA polymerase or due to deamination of cytosine. The protein is Uracil-DNA glycosylase of Mesomycoplasma hyopneumoniae (strain 7448) (Mycoplasma hyopneumoniae).